The primary structure comprises 337 residues: S-adenosylmethionine:tRNA ribosyltransferase-isomerase (337 aa).

It belongs to the QueA family. Monomer.

It is found in the cytoplasm. The enzyme catalyses 7-aminomethyl-7-carbaguanosine(34) in tRNA + S-adenosyl-L-methionine = epoxyqueuosine(34) in tRNA + adenine + L-methionine + 2 H(+). It functions in the pathway tRNA modification; tRNA-queuosine biosynthesis. Its function is as follows. Transfers and isomerizes the ribose moiety from AdoMet to the 7-aminomethyl group of 7-deazaguanine (preQ1-tRNA) to give epoxyqueuosine (oQ-tRNA). The chain is S-adenosylmethionine:tRNA ribosyltransferase-isomerase from Legionella pneumophila subsp. pneumophila (strain Philadelphia 1 / ATCC 33152 / DSM 7513).